The primary structure comprises 298 residues: Putative enoyl-CoA reductase (298 aa).

4 helical membrane passes run 162–182 (CVYY…PYYT), 189–209 (LVNA…AVHV), 229–249 (ILFS…WVAF), and 254–274 (SMLT…EWAV).

Belongs to the steroid 5-alpha reductase family.

The protein resides in the membrane. It functions in the pathway lipid metabolism; fatty acid biosynthesis. Functionally, involved in the synthesis of fatty acids. The chain is Putative enoyl-CoA reductase from Trypanosoma brucei brucei (strain 927/4 GUTat10.1).